We begin with the raw amino-acid sequence, 243 residues long: MEQGSGRLEDFPVNVFSVTPYTPSTADIQVSDDDKAGATLLFSGIFLGLVGITFTVMGWIKYQGVSHFEWTQLLGPVLLSVGVTFILIAVCKFKMLSCQLCKESEERVLDSEQTPGGPSFVFTGINQPITFHGATVVQYIPPPYGSPEPVGINTSYLQSVVSPCSLITSGGAAAAMSSPSQYYTIYPQDNSAFVVDEGCPSFADGGNHRPNPDADQLEETQLEEEACACFSPPPYEEIYSLPR.

2 helical membrane passes run 40–60 and 73–93; these read LLFS…MGWI and LLGP…VCKF.

As to quaternary structure, interacts with SLC34A1; regulates SLC34A1 internalization by PTH and FGF23.

It localises to the endoplasmic reticulum membrane. The protein localises to the apical cell membrane. Regulator of plasma phosphate homeostasis. Decreases serum inorganic phosphate (Pi) uptake by regulating the sodium-phosphate cotransporter SLC34A1 trafficking by PTH and FGF23 in the kidney. This is Transmembrane protein 174 (TMEM174) from Pongo abelii (Sumatran orangutan).